The chain runs to 302 residues: Deoxyribonuclease-1-like 1 (302 aa).

A signal peptide spans 1 to 18; it reads MHYPTALLFLILANGAQA. Active-site residues include Glu-97 and His-148. A disulfide bridge connects residues Cys-187 and Cys-224. N-linked (GlcNAc...) asparagine glycosylation is present at Asn-261.

The protein belongs to the DNase I family. In terms of tissue distribution, highest levels in skeletal and cardiac muscles. Detectable in all other tissues tested except brain.

It is found in the endoplasmic reticulum. The chain is Deoxyribonuclease-1-like 1 (DNASE1L1) from Homo sapiens (Human).